A 220-amino-acid polypeptide reads, in one-letter code: Small ribosomal subunit protein uS3c (220 aa).

In terms of domain architecture, KH type-2 spans 39–120 (IRDFIKNYVK…KLIIDIIRIT (82 aa)).

This sequence belongs to the universal ribosomal protein uS3 family. Part of the 30S ribosomal subunit.

It localises to the plastid. This is Small ribosomal subunit protein uS3c (rps3) from Epifagus virginiana (Beechdrops).